The primary structure comprises 173 residues: CDP-archaeol synthase (173 aa).

A run of 5 helical transmembrane segments spans residues 15 to 35 (GLWFILPAYIANLSACLFGGG), 59 to 79 (GFIVGVLAGAVVGLGEGLVVG), 84 to 104 (AGDGFILGLGAMAGDAVGSFV), 118 to 138 (VLDQLDFFVGAVLLYYLVYGW), and 142 to 162 (GWVLVGLAILTLALHWLTNVI).

It belongs to the CDP-archaeol synthase family. It depends on Mg(2+) as a cofactor.

It is found in the cell membrane. It carries out the reaction 2,3-bis-O-(geranylgeranyl)-sn-glycerol 1-phosphate + CTP + H(+) = CDP-2,3-bis-O-(geranylgeranyl)-sn-glycerol + diphosphate. The protein operates within membrane lipid metabolism; glycerophospholipid metabolism. Functionally, catalyzes the formation of CDP-2,3-bis-(O-geranylgeranyl)-sn-glycerol (CDP-archaeol) from 2,3-bis-(O-geranylgeranyl)-sn-glycerol 1-phosphate (DGGGP) and CTP. This reaction is the third ether-bond-formation step in the biosynthesis of archaeal membrane lipids. The chain is CDP-archaeol synthase from Methanopyrus kandleri (strain AV19 / DSM 6324 / JCM 9639 / NBRC 100938).